We begin with the raw amino-acid sequence, 242 residues long: Adapter protein MecA (242 aa).

This sequence belongs to the MecA family. As to quaternary structure, homodimer.

Its function is as follows. Enables the recognition and targeting of unfolded and aggregated proteins to the ClpC protease or to other proteins involved in proteolysis. The sequence is that of Adapter protein MecA from Streptococcus gordonii (strain Challis / ATCC 35105 / BCRC 15272 / CH1 / DL1 / V288).